The chain runs to 248 residues: ATP synthase subunit a, chloroplastic (248 aa).

5 consecutive transmembrane segments (helical) span residues 37-57 (AQVLITSWVVIAILLGLSIVA), 96-116 (VPFIGTMFLFIFVSNWSGALF), 135-155 (INTTVALALLTSVAYFYAGLH), 200-220 (LVVAVLISLVPLVVPIPMMFL), and 221-241 (GLFTSAIQALIFATLAAAYIG).

The protein belongs to the ATPase A chain family. F-type ATPases have 2 components, CF(1) - the catalytic core - and CF(0) - the membrane proton channel. CF(1) has five subunits: alpha(3), beta(3), gamma(1), delta(1), epsilon(1). CF(0) has four main subunits: a, b, b' and c.

It is found in the plastid. The protein localises to the chloroplast thylakoid membrane. Its function is as follows. Key component of the proton channel; it plays a direct role in the translocation of protons across the membrane. In Angiopteris evecta (Mule's foot fern), this protein is ATP synthase subunit a, chloroplastic.